Here is a 434-residue protein sequence, read N- to C-terminus: MRVLVLGSGVIGTASAYYLARQGFEVTVVDRQPAVAMETSFANAGQISPGYASPWAAPGVPLKAIKWLLERHAPLAIKLTGDVDQYLWMAQMLRNCTASRYAVNKERMVRLSEYSRDCLDELRAETGINYENRSLGTTQLFRTQAQVDAAAKDIAVLEQSGVPYELLDRDGIARVEPALAGVKDILAGALRLPNDQTGDCQLFTTKLADMALKLGVEFRFGQDIQRLDFAGDRINGVWIDGKLETADRYVLALGSYSPQMLKPLGIKAPVYPLKGYSLTVPITNADMAPTSTILDETYKVAITRFDNRIRVGGMAEIAGFDLSLNPRRRETLEMIVNDLYPRGGDLSQASFWTGLRPATPDGTPIVGATGFRNLFLNTGHGTLGWTMACGSGRLLADLIARKKPQISAEGLDISRYGNSREVAKHGQSAPAHQQ.

3 to 17 contributes to the FAD binding site; it reads VLVLGSGVIGTASAY.

It belongs to the DadA oxidoreductase family. FAD serves as cofactor.

It carries out the reaction a D-alpha-amino acid + A + H2O = a 2-oxocarboxylate + AH2 + NH4(+). The protein operates within amino-acid degradation; D-alanine degradation; NH(3) and pyruvate from D-alanine: step 1/1. Oxidative deamination of D-amino acids. The sequence is that of D-amino acid dehydrogenase from Pseudomonas putida (strain ATCC 700007 / DSM 6899 / JCM 31910 / BCRC 17059 / LMG 24140 / F1).